A 121-amino-acid chain; its full sequence is Large ribosomal subunit protein bL12 (121 aa).

This sequence belongs to the bacterial ribosomal protein bL12 family. As to quaternary structure, homodimer. Part of the ribosomal stalk of the 50S ribosomal subunit. Forms a multimeric L10(L12)X complex, where L10 forms an elongated spine to which 2 to 4 L12 dimers bind in a sequential fashion. Binds GTP-bound translation factors.

Forms part of the ribosomal stalk which helps the ribosome interact with GTP-bound translation factors. Is thus essential for accurate translation. The chain is Large ribosomal subunit protein bL12 from Shewanella halifaxensis (strain HAW-EB4).